A 64-amino-acid polypeptide reads, in one-letter code: Fatty acid-binding protein (64 aa).

Belongs to the calycin superfamily. Fatty-acid binding protein (FABP) family.

The protein resides in the cytoplasm. FABPs are thought to play a role in the intracellular transport of long-chain fatty acids and their acyl-CoA esters. The chain is Fatty acid-binding protein from Acarus siro (Flour mite).